The following is a 348-amino-acid chain: Glucokinase (348 aa).

14–19 lines the ATP pocket; it reads GDVGGS. Positions 327–348 are disordered; sequence SDPAPVAAPTHPRGGTAGDMHA.

Belongs to the bacterial glucokinase family.

The protein resides in the cytoplasm. It carries out the reaction D-glucose + ATP = D-glucose 6-phosphate + ADP + H(+). This chain is Glucokinase, found in Chromobacterium violaceum (strain ATCC 12472 / DSM 30191 / JCM 1249 / CCUG 213 / NBRC 12614 / NCIMB 9131 / NCTC 9757 / MK).